The primary structure comprises 189 residues: GTP cyclohydrolase 1 (189 aa).

Cys-78, His-81, and Cys-150 together coordinate Zn(2+).

The protein belongs to the GTP cyclohydrolase I family. In terms of assembly, toroid-shaped homodecamer, composed of two pentamers of five dimers.

It carries out the reaction GTP + H2O = 7,8-dihydroneopterin 3'-triphosphate + formate + H(+). The protein operates within cofactor biosynthesis; 7,8-dihydroneopterin triphosphate biosynthesis; 7,8-dihydroneopterin triphosphate from GTP: step 1/1. The chain is GTP cyclohydrolase 1 from Listeria welshimeri serovar 6b (strain ATCC 35897 / DSM 20650 / CCUG 15529 / CIP 8149 / NCTC 11857 / SLCC 5334 / V8).